We begin with the raw amino-acid sequence, 225 residues long: Membrane protein LapB (225 aa).

The protein to H.influenzae HI_1119.

The protein resides in the cell membrane. This Mannheimia haemolytica (Pasteurella haemolytica) protein is Membrane protein LapB (lapB).